We begin with the raw amino-acid sequence, 66 residues long: Large ribosomal subunit protein bL33c (66 aa).

The protein belongs to the bacterial ribosomal protein bL33 family.

Its subcellular location is the plastid. The protein localises to the chloroplast. The polypeptide is Large ribosomal subunit protein bL33c (Cycas taitungensis (Prince sago)).